The following is a 156-amino-acid chain: Large ribosomal subunit protein eL24 (156 aa).

Residues 110–123 (RAAKEKQKQKELEK) are compositionally biased toward basic and acidic residues. The disordered stretch occupies residues 110 to 156 (RAAKEKQKQKELEKKAKKVEKKKPTLAPKQKAAKITQKPAPRVGGKR).

It belongs to the eukaryotic ribosomal protein eL24 family.

The protein is Large ribosomal subunit protein eL24 (RPL24) of Schistosoma japonicum (Blood fluke).